A 146-amino-acid chain; its full sequence is Probable NADH dehydrogenase [ubiquinone] 1 alpha subcomplex subunit 12 (146 aa).

The protein belongs to the complex I NDUFA12 subunit family. As to quaternary structure, complex I is composed of 45 different subunits.

It localises to the mitochondrion inner membrane. In terms of biological role, accessory subunit of the mitochondrial membrane respiratory chain NADH dehydrogenase (Complex I), that is believed not to be involved in catalysis. Complex I functions in the transfer of electrons from NADH to the respiratory chain. The immediate electron acceptor for the enzyme is believed to be ubiquinone. The sequence is that of Probable NADH dehydrogenase [ubiquinone] 1 alpha subcomplex subunit 12 from Caenorhabditis elegans.